Here is a 583-residue protein sequence, read N- to C-terminus: Propane 2-monooxygenase operon transcriptional activator MimR (583 aa).

A Sigma-54 factor interaction domain is found at 320–513 (LAGRSSSFRR…LRHVLTETLR (194 aa)). ATP contacts are provided by residues 348 to 355 (GEKGSGRT) and 395 to 404 (DADFAVIVAD).

In terms of biological role, acts as a transcriptional activator of the mimABCD operon encoding the propane 2-monooxygenase complex. This Mycolicibacterium goodii (Mycobacterium goodii) protein is Propane 2-monooxygenase operon transcriptional activator MimR.